The primary structure comprises 212 residues: ER lumen protein-retaining receptor 1 (212 aa).

At 1–4 the chain is on the lumenal side; the sequence is MNIF. The chain crosses the membrane as a helical span at residues 5-24; it reads RFLGDISHLSAILILLLKIW. Residues 25 to 32 are Cytoplasmic-facing; that stretch reads KSRSCAGI. Residues 33–52 form a helical membrane-spanning segment; the sequence is SGKSQLLFAIVFTTRYLDLF. Positions 47–48 are interaction with the K-D-E-L motif on target proteins; the sequence is RY. The Lumenal segment spans residues 53 to 58; that stretch reads TNFISL. The chain crosses the membrane as a helical span at residues 59–79; sequence YNTSMKMVYVASSYATIWMIY. Residues 80–92 lie on the Cytoplasmic side of the membrane; that stretch reads SKFKATYDGNHDT. The chain crosses the membrane as a helical span at residues 93–110; it reads FRVEFLIVPTAILAFLVN. Over 111–116 the chain is Lumenal; sequence HDFTPL. A helical transmembrane segment spans residues 117-135; it reads EILWTFSIYLESVAILPQL. Residues 136–149 lie on the Cytoplasmic side of the membrane; sequence FMVSKTGEAETITS. Residues 150-168 traverse the membrane as a helical segment; that stretch reads HYLFALGIYRALYLFNWIW. Positions 159–169 are interaction with the K-D-E-L motif on target proteins; sequence RALYLFNWIWR. Residues 169 to 178 are Lumenal-facing; sequence RYQFEGFFDL. The chain crosses the membrane as a helical span at residues 179 to 199; the sequence is IAIVAGLVQTVLYCDFFYLYI. Residues 200 to 212 lie on the Cytoplasmic side of the membrane; it reads TKVLKGKKLSLPA. The interval 204–207 is important for recycling of cargo proteins with the sequence motif K-D-E-L from the Golgi to the endoplasmic reticulum; that stretch reads KGKK.

This sequence belongs to the ERD2 family.

Its subcellular location is the golgi apparatus membrane. It is found in the cytoplasmic vesicle. The protein resides in the COPI-coated vesicle membrane. The protein localises to the endoplasmic reticulum membrane. It localises to the endoplasmic reticulum-Golgi intermediate compartment membrane. In terms of biological role, receptor for the C-terminal sequence motif K-D-E-L that is present on endoplasmic reticulum resident proteins and that mediates their recycling from the Golgi back to the endoplasmic reticulum. The polypeptide is ER lumen protein-retaining receptor 1 (kdelr1) (Xenopus tropicalis (Western clawed frog)).